Here is an 889-residue protein sequence, read N- to C-terminus: A disintegrin and metalloproteinase with thrombospondin motifs 8 (889 aa).

Residues 1–26 (MLPAPAAPRWPPLLLLLLLLLPLARG) form the signal peptide. The propeptide occupies 27-213 (APARPAAGGQ…PLGATSRTKR (187 aa)). The segment at 138–210 (QGAGGSLAQP…PPPPLGATSR (73 aa)) is disordered. Over residues 173-183 (EGQRQERGDHQ) the composition is skewed to basic and acidic residues. A compositionally biased stretch (acidic residues) spans 184–197 (EDSEEESQEEEAEG). The Peptidase M12B domain occupies 219–429 (RFVETLLVAD…GHGDCLLDAP (211 aa)). Intrachain disulfides connect Cys294–Cys347, Cys323–Cys329, Cys341–Cys424, Cys379–Cys408, Cys452–Cys477, Cys463–Cys486, Cys472–Cys507, Cys501–Cys512, Cys538–Cys575, Cys542–Cys580, and Cys553–Cys565. A glycan (N-linked (GlcNAc...) asparagine) is linked at Asn344. Residue His363 coordinates Zn(2+). Glu364 is a catalytic residue. Positions 367 and 373 each coordinate Zn(2+). Residues Asn400, Asn465, and Asn490 are each glycosylated (N-linked (GlcNAc...) asparagine). The 88-residue stretch at 438–525 (GLPGRMALYQ…EEVERPKPVA (88 aa)) folds into the Disintegrin domain. One can recognise a TSP type-1 1 domain in the interval 526 to 581 (DGGWAPWGPWGECSRTCGGGVQFSHRECKDPEPQNGGRYCLGRRAKYQSCHTEECP). Residue Asn599 is glycosylated (N-linked (GlcNAc...) asparagine). The spacer stretch occupies residues 690–831 (RKVSGSLTPT…RATTNIIQPL (142 aa)). The TSP type-1 2 domain maps to 833-888 (HAQWVLGDWSECSSTCGAGWQRRTVECRDPSGQASATCNKALKPEDAKPCESQLCP).

Requires Zn(2+) as cofactor. The precursor is cleaved by a furin endopeptidase. In terms of processing, glycosylated. Can be O-fucosylated by POFUT2 on a serine or a threonine residue found within the consensus sequence C1-X(2)-(S/T)-C2-G of the TSP type-1 repeat domains where C1 and C2 are the first and second cysteine residue of the repeat, respectively. Fucosylated repeats can then be further glycosylated by the addition of a beta-1,3-glucose residue by the glucosyltransferase, B3GALTL. Fucosylation mediates the efficient secretion of ADAMTS family members. Can also be C-glycosylated with one or two mannose molecules on tryptophan residues within the consensus sequence W-X-X-W of the TPRs, and N-glycosylated. These other glycosylations can also facilitate secretion. As to expression, highly expressed in adult and fetal lung, lower expression in brain, placenta, heart, stomach and fetal brain and kidney.

The protein localises to the secreted. Its subcellular location is the extracellular space. The protein resides in the extracellular matrix. Functionally, has anti-angiogenic properties. The polypeptide is A disintegrin and metalloproteinase with thrombospondin motifs 8 (ADAMTS8) (Homo sapiens (Human)).